The sequence spans 148 residues: Lysozyme C (148 aa).

A signal peptide spans 1 to 18 (MKAVIILGLVLLSVTVQG). Residues 19–148 (KIFERCELAR…VSQYVQGCGV (130 aa)) form the C-type lysozyme domain. 4 cysteine pairs are disulfide-bonded: cysteine 24–cysteine 146, cysteine 48–cysteine 134, cysteine 83–cysteine 99, and cysteine 95–cysteine 113. Residues glutamate 53 and aspartate 71 contribute to the active site.

This sequence belongs to the glycosyl hydrolase 22 family. Monomer.

The protein localises to the secreted. It catalyses the reaction Hydrolysis of (1-&gt;4)-beta-linkages between N-acetylmuramic acid and N-acetyl-D-glucosamine residues in a peptidoglycan and between N-acetyl-D-glucosamine residues in chitodextrins.. In terms of biological role, lysozymes have primarily a bacteriolytic function; those in tissues and body fluids are associated with the monocyte-macrophage system and enhance the activity of immunoagents. The polypeptide is Lysozyme C (LYZ) (Miopithecus talapoin (Angolan talapoin)).